The sequence spans 80 residues: RNA-binding protein Hfq (80 aa).

The 61-residue stretch at 9 to 69 folds into the Sm domain; sequence DVFLNQVRKE…VSTISPNSPV (61 aa).

It belongs to the Hfq family. Homohexamer.

Its function is as follows. RNA chaperone that binds small regulatory RNA (sRNAs) and mRNAs to facilitate mRNA translational regulation in response to envelope stress, environmental stress and changes in metabolite concentrations. Also binds with high specificity to tRNAs. The chain is RNA-binding protein Hfq from Alkaliphilus oremlandii (strain OhILAs) (Clostridium oremlandii (strain OhILAs)).